Reading from the N-terminus, the 527-residue chain is Laccase-5 (527 aa).

Positions 1–23 are cleaved as a signal peptide; the sequence is MGKYHSFVNVVALSLSLSGRVFG. In terms of domain architecture, Plastocyanin-like 1 spans 25 to 150; the sequence is IGPVTDLTIS…DGLRGPLVVY (126 aa). Asn74 and Asn77 each carry an N-linked (GlcNAc...) asparagine glycan. Cu cation is bound by residues His87, His89, His132, and His134. Cystine bridges form between Cys108–Cys516 and Cys140–Cys230. N-linked (GlcNAc...) asparagine glycosylation is found at Asn156, Asn209, Asn233, Asn242, Asn276, Asn317, Asn358, Asn366, Asn393, and Asn402. Residues 162–306 enclose the Plastocyanin-like 2 domain; sequence VDDDTTVITL…GGVNSAILRY (145 aa). The 126-residue stretch at 373-498 folds into the Plastocyanin-like 3 domain; sequence TVPVLLQILS…AGFAIVWGED (126 aa). The Cu cation site is built by His425, His428, His430, His480, Cys481, His482, and His486.

This sequence belongs to the multicopper oxidase family. As to quaternary structure, homodimer. The cofactor is Cu cation.

The protein localises to the secreted. It carries out the reaction 4 hydroquinone + O2 = 4 benzosemiquinone + 2 H2O. In terms of biological role, lignin degradation and detoxification of lignin-derived products. In Trametes villosa (White-rot fungus), this protein is Laccase-5 (LCC5).